Reading from the N-terminus, the 171-residue chain is Myosin regulatory light chain 12A (171 aa).

A Phosphothreonine; by MLCK modification is found at Thr18. Position 19 is a phosphoserine; by MLCK (Ser19). 3 EF-hand domains span residues 28–63 (SQIQ…LGKN), 97–132 (DPED…MGDR), and 133–168 (FTDE…GAKD). Ca(2+)-binding residues include Asp41, Asn43, Asp45, and Asp52.

Myosin is a hexamer of 2 heavy chains and 4 light chains. Post-translationally, phosphorylation increases the actin-activated myosin ATPase activity and thereby regulates the contractile activity. It is required to generate the driving force in the migration of the cells but not necessary for localization of myosin-2 at the leading edge.

Myosin regulatory subunit that plays an important role in regulation of both smooth muscle and nonmuscle cell contractile activity via its phosphorylation. Implicated in cytokinesis, receptor capping, and cell locomotion. This chain is Myosin regulatory light chain 12A (MYL12A), found in Homo sapiens (Human).